The primary structure comprises 966 residues: Mitogen-activated protein kinase kinase kinase 13 (966 aa).

Disordered regions lie at residues 1-22 (MANFQEHLSCSSSPHLPFSESK), 30-49 (ELTAMGNHPSPKLLEDQQEK), and 90-114 (HDESETAVSQGNSNTVDGESTSGTE). Over residues 95 to 113 (TAVSQGNSNTVDGESTSGT) the composition is skewed to polar residues. A Protein kinase domain is found at 168-409 (ISELQWLGSG…FRQTLMHLDI (242 aa)). ATP-binding positions include 174–182 (LGSGAQGAV) and K195. The Proton acceptor role is filled by D279. 2 leucine-zipper regions span residues 433 to 454 (VKKHFEKIKSEGTCIHRLDEEL) and 486 to 507 (LSAIMLQLEMREKELIKREQAV). Disordered stretches follow at residues 534 to 599 (KRKG…RGSH), 611 to 655 (AQEN…HHPR), 744 to 834 (DIPS…RRQR), and 846 to 908 (STFS…GLSD). Residues 567 to 581 (SPLSGSPKMSTSSSK) are compositionally biased toward low complexity. The segment covering 582 to 594 (SRYRSKPRHRRGN) has biased composition (basic residues). 2 stretches are compositionally biased toward polar residues: residues 611–629 (AQENSPHPTYLHQAQSQYP) and 785–795 (RSESSLGTSHL). Over residues 814-827 (DSSEEEEGEVDSEV) the composition is skewed to acidic residues. The tract at residues 815-828 (SSEEEEGEVDSEVE) is acidic. Polar residues predominate over residues 846–855 (STFSSENFSV). A compositionally biased stretch (basic and acidic residues) spans 873 to 887 (LADKLEDRLAEKLDD).

Belongs to the protein kinase superfamily. STE Ser/Thr protein kinase family. MAP kinase kinase kinase subfamily. As to quaternary structure, homodimer; forms dimers through the leucine-zipper motif. Interacts with the C-terminus of MAPK8IP1 through the kinase catalytic domain. Binds PRDX3. Associates with the IKK complex through the kinase domain. Mg(2+) serves as cofactor. Post-translationally, autophosphorylated on serine and threonine residues. Expressed in the adult brain, liver, placenta and pancreas, with expression strongest in the pancreas.

The protein resides in the cytoplasm. Its subcellular location is the membrane. The enzyme catalyses L-seryl-[protein] + ATP = O-phospho-L-seryl-[protein] + ADP + H(+). It catalyses the reaction L-threonyl-[protein] + ATP = O-phospho-L-threonyl-[protein] + ADP + H(+). Its activity is regulated as follows. Activated by autophosphorylation and homodimerization. In terms of biological role, activates the JUN N-terminal pathway through activation of the MAP kinase kinase MAP2K7. Acts synergistically with PRDX3 to regulate the activation of NF-kappa-B in the cytosol. This activation is kinase-dependent and involves activating the IKK complex, the IKBKB-containing complex that phosphorylates inhibitors of NF-kappa-B. In Homo sapiens (Human), this protein is Mitogen-activated protein kinase kinase kinase 13.